A 3206-amino-acid polypeptide reads, in one-letter code: Highly reducing polyketide synthase ltbA (3206 aa).

A Ketosynthase family 3 (KS3) domain is found at 5–434 (PAPIAIIGVG…GTNCHVILEA (430 aa)). Residues cysteine 179, histidine 314, and histidine 354 each act as for beta-ketoacyl synthase activity in the active site. The span at 441–463 (PTGTNGIKTNGTRINGIKTNGAD) shows a compositional bias: polar residues. A disordered region spans residues 441 to 472 (PTGTNGIKTNGTRINGIKTNGADTNERESMKN). Positions 575–890 (VFSGQGAQWH…EYLSALQRNT (316 aa)) are malonyl-CoA:ACP transacylase (MAT) domain. Residues 958–1098 (HDLLGLFDPA…GEITVEYETD (141 aa)) are N-terminal hotdog fold. Residues 958–1278 (HDLLGLFDPA…LLVNLRAIGE (321 aa)) form a dehydratase (DH) domain region. The PKS/mFAS DH domain occupies 958–1284 (HDLLGLFDPA…AIGETREDED (327 aa)). Residue histidine 990 is the Proton acceptor; for dehydratase activity of the active site. The C-terminal hotdog fold stretch occupies residues 1128–1284 (DTDMTKSEFY…AIGETREDED (157 aa)). Aspartate 1193 (proton donor; for dehydratase activity) is an active-site residue. A methyltransferase (CMet) domain region spans residues 1450-1640 (ESGILVGPYE…LARNGFGGIH (191 aa)). The interval 1871–2185 (LLSSLRFVDD…RKHTGKVVLQ (315 aa)) is enoyl reductase (ER) domain. Residues 2208 to 2395 (GTYVAAGGLG…SVDAHGALKE (188 aa)) form a ketoreductase (KR) domain region. A Carrier domain is found at 2499–2577 (EEAEQLIRDA…ALAATVASRS (79 aa)). Serine 2537 carries the O-(pantetheine 4'-phosphoryl)serine modification. The disordered stretch occupies residues 2584–2611 (IRHSSRLQEATTQAENKDAPKNEKEGPS). Residues 2598 to 2610 (ENKDAPKNEKEGP) are compositionally biased toward basic and acidic residues. Residues 2994 to 3206 (HLIPSFGKAV…IKTIIQAGQE (213 aa)) form a carnitine O-acyltransferase (cAT) domain region.

It depends on pantetheine 4'-phosphate as a cofactor.

It participates in secondary metabolite biosynthesis. Its function is as follows. Highly reducing polyketide synthase; part of the gene cluster that mediates the biosynthesis of luteodienoside A, a glycosylated polyketide consisting of an unusual 1-O-beta-D-glucopyranosyl-myo-inositol (glucinol) ester of 3-hydroxy-2,2,4-trimethylocta-4,6-dienoic acid. LtbA produces the trimethylated polyketide chain from acetyl-CoA, malonyl-CoA and S-adenosylmethionine (SAM). The ltbA carnitine O-acyltransferase (cAT) domain then uses glucinol produced by the glycosyltransferase ltbB as an offloading substrate to release luteodienoside A. Furthermore, the PKS C-methyltransferase (CMeT) domain is capable of catalysing gem-dimethylation of the 3-hydroxy-2,2,4-trimethylocta-4,6-dienoic acid intermediate, without requiring reversible product release and recapture by the cAT domain. Since ltbA and ltbB are sufficient for the biosynthesis of luteodienoside A, the functions of the methyltransferase ltbC and the FAD-binding monooxygenase ltbD within the pathway remain obscur. This Aspergillus luteorubrus protein is Highly reducing polyketide synthase ltbA.